Here is a 123-residue protein sequence, read N- to C-terminus: Small ribosomal subunit protein uS12 (123 aa).

A 3-methylthioaspartic acid modification is found at Asp-89.

The protein belongs to the universal ribosomal protein uS12 family. In terms of assembly, part of the 30S ribosomal subunit. Contacts proteins S8 and S17. May interact with IF1 in the 30S initiation complex.

Functionally, with S4 and S5 plays an important role in translational accuracy. Its function is as follows. Interacts with and stabilizes bases of the 16S rRNA that are involved in tRNA selection in the A site and with the mRNA backbone. Located at the interface of the 30S and 50S subunits, it traverses the body of the 30S subunit contacting proteins on the other side and probably holding the rRNA structure together. The combined cluster of proteins S8, S12 and S17 appears to hold together the shoulder and platform of the 30S subunit. The sequence is that of Small ribosomal subunit protein uS12 from Orientia tsutsugamushi (strain Boryong) (Rickettsia tsutsugamushi).